A 792-amino-acid chain; its full sequence is Alpha-1,6-mannosylglycoprotein 6-beta-N-acetylglucosaminyltransferase B (792 aa).

The Cytoplasmic portion of the chain corresponds to 1 to 24 (MITVNPDGKIMVRRCLVTLRPFRL). The chain crosses the membrane as a helical; Signal-anchor for type II membrane protein span at residues 25 to 45 (FVLGIGFFTLCFLMTSLGGQF). Over 46–792 (SARRLGDSPF…GQVALCQGCL (747 aa)) the chain is Lumenal. N-linked (GlcNAc...) asparagine glycosylation occurs at asparagine 127. Intrachain disulfides connect cysteine 157–cysteine 195, cysteine 168–cysteine 208, cysteine 184–cysteine 353, and cysteine 387–cysteine 644. Asparagine 675 is a glycosylation site (N-linked (GlcNAc...) asparagine). Disulfide bonds link cysteine 700/cysteine 775, cysteine 704/cysteine 777, cysteine 711/cysteine 764, cysteine 732/cysteine 753, and cysteine 788/cysteine 791.

Belongs to the glycosyltransferase 18 family. It depends on Mn(2+) as a cofactor. Present in brain (at protein level). Predominantly expressed in hippocampus, superficial layers of the brain cortex, striatum, nucleus accumbens, a subset of nuclei in the thalamus, inferior colliculus, brain stem and cerebellum.

The protein localises to the golgi apparatus membrane. It catalyses the reaction N(4)-{beta-D-GlcNAc-(1-&gt;2)-[beta-D-GlcNAc-(1-&gt;4)]-alpha-D-Man-(1-&gt;3)-[beta-D-GlcNAc-(1-&gt;2)-alpha-D-Man-(1-&gt;6)]-beta-D-Man-(1-&gt;4)-beta-D-GlcNAc-(1-&gt;4)-beta-D-GlcNAc}-L-asparaginyl-[protein] + UDP-N-acetyl-alpha-D-glucosamine = N(4)-{beta-D-GlcNAc-(1-&gt;2)-[beta-D-GlcNAc-(1-&gt;4)]-alpha-D-Man-(1-&gt;3)-[beta-D-GlcNAc-(1-&gt;2)-[beta-D-GlcNAc-(1-&gt;6)]-alpha-D-Man-(1-&gt;6)]-beta-D-Man-(1-&gt;4)-beta-D-GlcNAc-(1-&gt;4)-beta-D-GlcNAc}-L-asparaginyl-[protein] + UDP + H(+). It carries out the reaction 3-O-[N-acetyl-beta-D-glucosaminyl-(1-&gt;2)-alpha-D-mannosyl]-L-seryl-[protein] + UDP-N-acetyl-alpha-D-glucosamine = O(3)-{N-acetyl-beta-D-glucosaminyl-(1-&gt;2)-[N-acetyl-beta-D-glucosaminyl-(1-&gt;6)]-alpha-D-mannosyl}-L-seryl-[protein] + UDP + H(+). The catalysed reaction is 3-O-[N-acetyl-beta-D-glucosaminyl-(1-&gt;2)-alpha-D-mannosyl]-L-threonyl-[protein] + UDP-N-acetyl-alpha-D-glucosamine = O(3)-{N-acetyl-beta-D-glucosaminyl-(1-&gt;2)-[N-acetyl-beta-D-glucosaminyl-(1-&gt;6)]-alpha-D-mannosyl}-L-threonyl-[protein] + UDP + H(+). It functions in the pathway protein modification; protein glycosylation. In terms of biological role, glycosyltransferase that acts on alpha-linked mannose of N-glycans and O-mannosyl glycans. Catalyzes the transfer of N-acetylglucosamine (GlcNAc) to the beta 1-6 linkage of the mannose residue of GlcNAc-beta1,2-Man-alpha on both the alpha1,3- and alpha1,6-linked mannose arms in the core structure of N-glycan. Also acts on the GlcNAc-beta1,2-Man-alpha1-Ser/Thr moiety, forming a 2,6-branched structure in brain O-mannosyl glycan. Plays an active role in modulating integrin and laminin-dependent adhesion and migration of neuronal cells via its activity in the O-mannosyl glycan pathway. The protein is Alpha-1,6-mannosylglycoprotein 6-beta-N-acetylglucosaminyltransferase B (Mgat5b) of Mus musculus (Mouse).